Here is a 206-residue protein sequence, read N- to C-terminus: Ribosomal RNA small subunit methyltransferase G (206 aa).

S-adenosyl-L-methionine is bound by residues G71, F76, I125–E126, and R139.

This sequence belongs to the methyltransferase superfamily. RNA methyltransferase RsmG family.

Its subcellular location is the cytoplasm. It carries out the reaction guanosine(527) in 16S rRNA + S-adenosyl-L-methionine = N(7)-methylguanosine(527) in 16S rRNA + S-adenosyl-L-homocysteine. Functionally, specifically methylates the N7 position of guanine in position 527 of 16S rRNA. This chain is Ribosomal RNA small subunit methyltransferase G, found in Cereibacter sphaeroides (strain ATCC 17023 / DSM 158 / JCM 6121 / CCUG 31486 / LMG 2827 / NBRC 12203 / NCIMB 8253 / ATH 2.4.1.) (Rhodobacter sphaeroides).